We begin with the raw amino-acid sequence, 298 residues long: Cyclic dof factor 1 (298 aa).

Positions 27–46 (EEEEKNQNKTLTDQSEKDKT) are disordered. A Dof-type zinc finger spans residues 54 to 108 (LPCPRCNSMETKFCYYNNYNVNQPRHFCKACQRYWTSGGTMRSVPIGAGRRKNKN). C56, C59, C81, and C84 together coordinate Zn(2+). Positions 200 to 231 (SSSPTSTLGKHSRDEDETVKQKQRNGSVLVPK) are disordered. Residues 210–219 (HSRDEDETVK) are compositionally biased toward basic and acidic residues.

Interacts with ADO2 (via kelch repeats), ADO3 (via kelch repeats) and GI (via N-terminus). Post-translationally, ubiquitinated. In terms of tissue distribution, expressed in the vascular tissues of cotyledons, leaves and hypocotyls and in stomata. Not detected in roots.

The protein resides in the nucleus. In terms of biological role, transcription factor that binds specifically to a 5'-AA[AG]G-3' consensus core sequence. A flanking TGT sequence contributes to the specificity of binding. Regulates a photoperiodic flowering response. Transcriptional repressor of 'CONSTANS' expression. The DNA-binding ability is not modulated by 'GIGANTEA' but the stability of CDF1 is controlled by the proteasome-dependent pathway. Ubiquitinated by the SCF(ADO3) E3 ubiquitin ligase complex. Binds to the FT promoter in the morning. The polypeptide is Cyclic dof factor 1 (CDF1) (Arabidopsis thaliana (Mouse-ear cress)).